The sequence spans 100 residues: Large ribosomal subunit protein uL23 (100 aa).

The protein belongs to the universal ribosomal protein uL23 family. Part of the 50S ribosomal subunit. Contacts protein L29, and trigger factor when it is bound to the ribosome.

In terms of biological role, one of the early assembly proteins it binds 23S rRNA. One of the proteins that surrounds the polypeptide exit tunnel on the outside of the ribosome. Forms the main docking site for trigger factor binding to the ribosome. This Buchnera aphidicola subsp. Acyrthosiphon pisum (strain 5A) protein is Large ribosomal subunit protein uL23.